Reading from the N-terminus, the 471-residue chain is Argininosuccinate lyase (471 aa).

This sequence belongs to the lyase 1 family. Argininosuccinate lyase subfamily.

It is found in the cytoplasm. The catalysed reaction is 2-(N(omega)-L-arginino)succinate = fumarate + L-arginine. It functions in the pathway amino-acid biosynthesis; L-arginine biosynthesis; L-arginine from L-ornithine and carbamoyl phosphate: step 3/3. In Ehrlichia canis (strain Jake), this protein is Argininosuccinate lyase.